A 381-amino-acid chain; its full sequence is tRNA-specific 2-thiouridylase MnmA (381 aa).

ATP is bound by residues 9–16 and Met35; that span reads GMSGGVDS. Positions 95–97 are interaction with target base in tRNA; it reads NPD. Cys100 serves as the catalytic Nucleophile. Residues Cys100 and Cys196 are joined by a disulfide bond. Residue Gly124 coordinates ATP. Residues 146-148 form an interaction with tRNA region; that stretch reads KDQ. The active-site Cysteine persulfide intermediate is Cys196. The tract at residues 308–309 is interaction with tRNA; sequence RY.

It belongs to the MnmA/TRMU family.

The protein resides in the cytoplasm. It carries out the reaction S-sulfanyl-L-cysteinyl-[protein] + uridine(34) in tRNA + AH2 + ATP = 2-thiouridine(34) in tRNA + L-cysteinyl-[protein] + A + AMP + diphosphate + H(+). Catalyzes the 2-thiolation of uridine at the wobble position (U34) of tRNA, leading to the formation of s(2)U34. This chain is tRNA-specific 2-thiouridylase MnmA, found in Burkholderia multivorans (strain ATCC 17616 / 249).